A 102-amino-acid chain; its full sequence is Mitochondrial import inner membrane translocase subunit Tim10 B (102 aa).

Positions 27–51 (CFQRCVPSLHHRALDAEEEACLHSC) match the Twin CX3C motif motif. 2 cysteine pairs are disulfide-bonded: cysteine 27–cysteine 51 and cysteine 31–cysteine 47.

As to quaternary structure, component of the TIM22 complex, which core is composed of TIMM22, associated with TIMM10 (TIMM10A and/or TIMM10B), TIMM9, AGK and TIMM29.

It localises to the mitochondrion inner membrane. Its function is as follows. Component of the TIM22 complex, a complex that mediates the import and insertion of multi-pass transmembrane proteins into the mitochondrial inner membrane. The TIM22 complex forms a twin-pore translocase that uses the membrane potential as the external driving force. In the TIM22 complex, it may act as a docking point for the soluble 70 kDa complex that guides the target proteins in transit through the aqueous mitochondrial intermembrane space. In Pongo abelii (Sumatran orangutan), this protein is Mitochondrial import inner membrane translocase subunit Tim10 B (TIMM10B).